The primary structure comprises 193 residues: Probable GTP-binding protein EngB (193 aa).

The EngB-type G domain occupies 20–193 (GVPEVAFAGR…ELAHEISRCI (174 aa)). GTP-binding positions include 28–35 (GRSNVGKS), 55–59 (GSTRQ), 73–76 (DLPG), 140–143 (TKAD), and 171–176 (IMWVSS). Residues S35 and T57 each contribute to the Mg(2+) site.

It belongs to the TRAFAC class TrmE-Era-EngA-EngB-Septin-like GTPase superfamily. EngB GTPase family. Mg(2+) is required as a cofactor.

In terms of biological role, necessary for normal cell division and for the maintenance of normal septation. The protein is Probable GTP-binding protein EngB of Anaplasma phagocytophilum (strain HZ).